The chain runs to 70 residues: Conotoxin Cal6.11 (70 aa).

Positions 1–22 (MKLTCVLIIAVLILTACQFIAA) are cleaved as a signal peptide. A propeptide spanning residues 23–43 (DNTEYRKWRRSGTSTGMRLGS) is cleaved from the precursor. 3 disulfide bridges follow: cysteine 46–cysteine 57, cysteine 50–cysteine 62, and cysteine 56–cysteine 69. 2 positions are modified to 4-hydroxyproline: proline 48 and proline 58. Glutamate 60 and glutamate 67 each carry 4-carboxyglutamate.

The protein belongs to the conotoxin O1 superfamily. In terms of tissue distribution, expressed by the venom duct.

It localises to the secreted. Its function is as follows. Probable neurotoxin with unknown target. Possibly targets ion channels. In Californiconus californicus (California cone), this protein is Conotoxin Cal6.11.